A 374-amino-acid chain; its full sequence is Chaperone protein DnaJ (374 aa).

A J domain is found at 5 to 70; it reads DYYEVLGVNL…RKRASYDQFG (66 aa). The segment at 133–210 adopts a CR-type zinc-finger fold; the sequence is GLSRTIKVPT…CHGQGRQQQT (78 aa). Residues cysteine 146, cysteine 149, cysteine 162, cysteine 165, cysteine 184, cysteine 187, cysteine 198, and cysteine 201 each contribute to the Zn(2+) site. CXXCXGXG motif repeat units follow at residues 146–153, 162–169, 184–191, and 198–205; these read CKTCNGSG, CPRCNGSG, CSVCRGRG, and CTDCHGQG.

It belongs to the DnaJ family. As to quaternary structure, homodimer. The cofactor is Zn(2+).

It is found in the cytoplasm. In terms of biological role, participates actively in the response to hyperosmotic and heat shock by preventing the aggregation of stress-denatured proteins and by disaggregating proteins, also in an autonomous, DnaK-independent fashion. Unfolded proteins bind initially to DnaJ; upon interaction with the DnaJ-bound protein, DnaK hydrolyzes its bound ATP, resulting in the formation of a stable complex. GrpE releases ADP from DnaK; ATP binding to DnaK triggers the release of the substrate protein, thus completing the reaction cycle. Several rounds of ATP-dependent interactions between DnaJ, DnaK and GrpE are required for fully efficient folding. Also involved, together with DnaK and GrpE, in the DNA replication of plasmids through activation of initiation proteins. This chain is Chaperone protein DnaJ, found in Coxiella burnetii (strain RSA 331 / Henzerling II).